The sequence spans 190 residues: ATP synthase subunit delta (190 aa).

The protein belongs to the ATPase delta chain family. In terms of assembly, F-type ATPases have 2 components, F(1) - the catalytic core - and F(0) - the membrane proton channel. F(1) has five subunits: alpha(3), beta(3), gamma(1), delta(1), epsilon(1). F(0) has three main subunits: a(1), b(2) and c(10-14). The alpha and beta chains form an alternating ring which encloses part of the gamma chain. F(1) is attached to F(0) by a central stalk formed by the gamma and epsilon chains, while a peripheral stalk is formed by the delta and b chains.

The protein resides in the cell inner membrane. Its function is as follows. F(1)F(0) ATP synthase produces ATP from ADP in the presence of a proton or sodium gradient. F-type ATPases consist of two structural domains, F(1) containing the extramembraneous catalytic core and F(0) containing the membrane proton channel, linked together by a central stalk and a peripheral stalk. During catalysis, ATP synthesis in the catalytic domain of F(1) is coupled via a rotary mechanism of the central stalk subunits to proton translocation. In terms of biological role, this protein is part of the stalk that links CF(0) to CF(1). It either transmits conformational changes from CF(0) to CF(1) or is implicated in proton conduction. The sequence is that of ATP synthase subunit delta from Petrotoga mobilis (strain DSM 10674 / SJ95).